A 219-amino-acid chain; its full sequence is Probable oxidoreductase virH (219 aa).

Belongs to the oxidoreductase OpS7 family.

It participates in secondary metabolite biosynthesis. Probable oxidoreductase; part of the gene cluster that mediates the biosynthesis of virensols and trichoxide, fungal natural products that contain or are derived from a salicylaldehyde core. The pathway begins with the synthesis of the reduced chain in virensol C by the highly reducing polyketide synthase virA via condensation of one acetate and 8 malonate units. VirA has interesting programming rules since the first 2 ketides are fully reduced, the 3 following ketides undergo beta-dehydration, and the last 3 ketides are only reduced to beta-hydroxys to yield the trihydroxy portion. The production of aldehyde virensol C by virA alone is surprising, since virA does not contain a reductase (R) domain that is typically associated with reductive product release in HRPKS. The cupin-domain enzyme virC is involved in enhancing virA product turnover. The short-chain dehydrogenase virB then oxidizes the C-7 alcohol of virensol C to a ketone, yielding virensol D. Virensol D is further transformed to salicylaldehyde 5-deoxyaurocitrin by the short-chain dehydrogenase virD. VirD catalyzes the dehydrogenation of C-3 to form the beta-ketone aldehyde, which is followed by the generation of the nucleophilic C-2 that is required for the intramolecular aldol condensation between C-2 and C-7, itself followed by dehydration and aromatization which leads to salicylaldehyde 5-deoxyaurocitrin. While the dehydrogenation of virensol D is definitely catalyzed by virD, the aldol condensation and dehydration may be uncatalyzed or assisted by virD. The short chain dehydrogenase virG then converts salicylaldehyde 5-deoxyaurocitrin into virensol B which is further hydroxylated by the cytochrome P450 monooxygenase virE to yield the hydroquinone virensol A. VirI then may oxidize virensol A to form the quinone, while virH performs the epoxidation. Finally, the two remaining short-chain dehydrogenases, virK and virL, are probably responsible for reducing the ketones to the corresponding alcohols to furnish the epoxycyclohexanol structure in trichoxide. The polypeptide is Probable oxidoreductase virH (Hypocrea virens (strain Gv29-8 / FGSC 10586) (Gliocladium virens)).